The primary structure comprises 218 residues: Ribose-5-phosphate isomerase A (218 aa).

Substrate-binding positions include 27–30 (TGST), 80–83 (DGAD), and 93–96 (KGGG). Glu-102 (proton acceptor) is an active-site residue. Lys-120 is a binding site for substrate.

The protein belongs to the ribose 5-phosphate isomerase family. In terms of assembly, homodimer.

It carries out the reaction aldehydo-D-ribose 5-phosphate = D-ribulose 5-phosphate. It participates in carbohydrate degradation; pentose phosphate pathway; D-ribose 5-phosphate from D-ribulose 5-phosphate (non-oxidative stage): step 1/1. Functionally, catalyzes the reversible conversion of ribose-5-phosphate to ribulose 5-phosphate. The polypeptide is Ribose-5-phosphate isomerase A (Thiobacillus denitrificans (strain ATCC 25259 / T1)).